The chain runs to 324 residues: Acetyl-coenzyme A carboxylase carboxyl transferase subunit alpha (324 aa).

The CoA carboxyltransferase C-terminal domain occupies 37-291 (ILEDKLENLE…NVVLQKTFEQ (255 aa)).

The protein belongs to the AccA family. As to quaternary structure, acetyl-CoA carboxylase is a heterohexamer composed of biotin carboxyl carrier protein (AccB), biotin carboxylase (AccC) and two subunits each of ACCase subunit alpha (AccA) and ACCase subunit beta (AccD).

It localises to the cytoplasm. It carries out the reaction N(6)-carboxybiotinyl-L-lysyl-[protein] + acetyl-CoA = N(6)-biotinyl-L-lysyl-[protein] + malonyl-CoA. The protein operates within lipid metabolism; malonyl-CoA biosynthesis; malonyl-CoA from acetyl-CoA: step 1/1. In terms of biological role, component of the acetyl coenzyme A carboxylase (ACC) complex. First, biotin carboxylase catalyzes the carboxylation of biotin on its carrier protein (BCCP) and then the CO(2) group is transferred by the carboxyltransferase to acetyl-CoA to form malonyl-CoA. This Bacillus cytotoxicus (strain DSM 22905 / CIP 110041 / 391-98 / NVH 391-98) protein is Acetyl-coenzyme A carboxylase carboxyl transferase subunit alpha.